Reading from the N-terminus, the 115-residue chain is Large ribosomal subunit protein eL30 (115 aa).

Phosphoserine occurs at positions 10 and 16. N6-acetyllysine; alternate is present on lysine 26. A Glycyl lysine isopeptide (Lys-Gly) (interchain with G-Cter in SUMO2); alternate cross-link involves residue lysine 26.

It belongs to the eukaryotic ribosomal protein eL30 family. In terms of assembly, component of the large ribosomal subunit.

The protein localises to the cytoplasm. Component of the large ribosomal subunit. The ribosome is a large ribonucleoprotein complex responsible for the synthesis of proteins in the cell. This Oryctolagus cuniculus (Rabbit) protein is Large ribosomal subunit protein eL30 (RPL30).